The primary structure comprises 1176 residues: Leucine--tRNA ligase, cytoplasmic (1176 aa).

L-leucine-binding residues include tyrosine 52 and tyrosine 54. The 'HIGH' region motif lies at 60–63 (HLGH). The residue at position 167 (serine 167) is a Phosphoserine. An editing domain region spans residues 260 to 509 (GPQEYTLLKL…DAGDALIYME (250 aa)). L-leucine is bound by residues leucine 594 and serine 597. Residues 716-720 (KMSKS) carry the 'KMSKS' region motif. Lysine 719 contacts ATP. Serine 720 carries the post-translational modification Phosphoserine. 2 positions are modified to N6-acetyllysine: lysine 970 and lysine 1047.

Belongs to the class-I aminoacyl-tRNA synthetase family. Part of the aminoacyl-tRNA synthetase multienzyme complex, also known as multisynthetase complex (MSC), that is composed of the aminoacyl-tRNA ligases for Arg (RARS1), Asp (DARS1), Gln (QARS1), Ile (IARS1), Leu (LARS1), Lys (KARS1), Met (MARS1) the bifunctional ligase for Glu and Pro (EPRS1) and the auxiliary subunits AIMP1/p43, AIMP2/p38 and EEF1E1/p18.

It is found in the cytoplasm. It carries out the reaction tRNA(Leu) + L-leucine + ATP = L-leucyl-tRNA(Leu) + AMP + diphosphate. The catalysed reaction is L-methionyl-tRNA(Leu) + H2O = tRNA(Leu) + L-methionine + H(+). 5-fluoro-1,3-dihydro-1-hydroxy-1,2-benzoxaborole inhibits LARS1 by forming a covalent adduct with the 3' adenosine of tRNA(Leu) at the editing site, thus locking the enzyme in an inactive conformation. In terms of biological role, aminoacyl-tRNA synthetase that catalyzes the specific attachment of leucine to its cognate tRNA (tRNA(Leu)). It performs tRNA aminoacylation in a two-step reaction: Leu is initially activated by ATP to form a leucyl-adenylate (Leu-AMP) intermediate; then the leucyl moiety is transferred to the acceptor 3' end of the tRNA to yield leucyl-tRNA. To improve the fidelity of catalytic reactions, it is also able to hydrolyze misactivated aminoacyl-adenylate intermediates (pre-transfer editing) and mischarged aminoacyl-tRNAs (post-transfer editing). This is Leucine--tRNA ligase, cytoplasmic from Homo sapiens (Human).